The following is a 462-amino-acid chain: Argininosuccinate lyase (462 aa).

Belongs to the lyase 1 family. Argininosuccinate lyase subfamily.

It is found in the cytoplasm. It catalyses the reaction 2-(N(omega)-L-arginino)succinate = fumarate + L-arginine. It participates in amino-acid biosynthesis; L-arginine biosynthesis; L-arginine from L-ornithine and carbamoyl phosphate: step 3/3. This is Argininosuccinate lyase from Gloeothece citriformis (strain PCC 7424) (Cyanothece sp. (strain PCC 7424)).